A 372-amino-acid polypeptide reads, in one-letter code: tRNA-specific 2-thiouridylase MnmA 1 (372 aa).

ATP-binding positions include 26–33 (AISGGVDS) and M52. C118 acts as the Nucleophile in catalysis. A disulfide bridge links C118 with C214. G142 is an ATP binding site. The interaction with tRNA stretch occupies residues 164-166 (KDQ). Residue C214 is the Cysteine persulfide intermediate of the active site.

Belongs to the MnmA/TRMU family.

Its subcellular location is the cytoplasm. The enzyme catalyses S-sulfanyl-L-cysteinyl-[protein] + uridine(34) in tRNA + AH2 + ATP = 2-thiouridine(34) in tRNA + L-cysteinyl-[protein] + A + AMP + diphosphate + H(+). Catalyzes the 2-thiolation of uridine at the wobble position (U34) of tRNA, leading to the formation of s(2)U34. This chain is tRNA-specific 2-thiouridylase MnmA 1, found in Syntrophus aciditrophicus (strain SB).